We begin with the raw amino-acid sequence, 513 residues long: MQLNSTEISDLIKQRIGKFEAVSEARNEGTIVSVSDGIVRINGLAECMQGEMIELPNGGFAMALNLERDSVGAVVMGPFRDLREGQKVKSTGRILEVPVGKGLLGRVVNTLGAPIDGKGPIENDGYSPIEVIAPGVIDRKSVDQPVQTGWKSIDSMVPIGRGQRELIIGDRQVGKTAIAIDAIINQKHTGLFSIYVAIGQKASTIANVVNKLEEHGALENTIVVVASASETAALQYLAPYAGCSMGEYFRDRGEDALIVYDDLSKQAVAYRQISLLLKRPPGREAYPGDVFYLHSRLLERASRVSAAYVEAFTKGAVKGKTGSLTALPIIETQGGDVSAFVPTNVISITDGQIFLTTELFNSGIRPAVDPGISVSRVGGSAQCKVIKKLAGGIRTALAQYRELAAFAQFASDLDETTRKQLDHGKKVTELMKQKQYAPMSVAEQALSLFSAEKGYLTDVDVEKVLDFESSLISYAKTEHAEFYAQLNETGDYSKEIEGQFHAILETFKATQTW.

169-176 (GDRQVGKT) is an ATP binding site.

It belongs to the ATPase alpha/beta chains family. As to quaternary structure, F-type ATPases have 2 components, CF(1) - the catalytic core - and CF(0) - the membrane proton channel. CF(1) has five subunits: alpha(3), beta(3), gamma(1), delta(1), epsilon(1). CF(0) has three main subunits: a(1), b(2) and c(9-12). The alpha and beta chains form an alternating ring which encloses part of the gamma chain. CF(1) is attached to CF(0) by a central stalk formed by the gamma and epsilon chains, while a peripheral stalk is formed by the delta and b chains.

It is found in the cell inner membrane. The catalysed reaction is ATP + H2O + 4 H(+)(in) = ADP + phosphate + 5 H(+)(out). Functionally, produces ATP from ADP in the presence of a proton gradient across the membrane. The alpha chain is a regulatory subunit. The protein is ATP synthase subunit alpha 2 of Psychromonas ingrahamii (strain DSM 17664 / CCUG 51855 / 37).